The primary structure comprises 581 residues: Threonine--tRNA ligase (581 aa).

Residues 185–478 (DHRKLGKELD…LIEHYGGAFP (294 aa)) are catalytic. Residues Cys278, His329, and His455 each coordinate Zn(2+).

The protein belongs to the class-II aminoacyl-tRNA synthetase family. In terms of assembly, homodimer. It depends on Zn(2+) as a cofactor.

It localises to the cytoplasm. It catalyses the reaction tRNA(Thr) + L-threonine + ATP = L-threonyl-tRNA(Thr) + AMP + diphosphate + H(+). In terms of biological role, catalyzes the attachment of threonine to tRNA(Thr) in a two-step reaction: L-threonine is first activated by ATP to form Thr-AMP and then transferred to the acceptor end of tRNA(Thr). Also edits incorrectly charged L-seryl-tRNA(Thr). The sequence is that of Threonine--tRNA ligase from Borreliella afzelii (strain PKo) (Borrelia afzelii).